The chain runs to 495 residues: DNA-directed RNA polymerase subunit alpha (495 aa).

Residues 1 to 301 (MPYIKHIETK…RMLASLQAPP (301 aa)) are alpha N-terminal domain (alpha-NTD). 2 disordered regions span residues 159–227 (SLVP…EAPH) and 391–495 (QEQV…PEET). The interval 170-237 (PRDPLEPEND…IPSMRDDHMT (68 aa)) is insert. The segment covering 172 to 186 (DPLEPENDSKSETKS) has biased composition (basic and acidic residues). Composition is skewed to polar residues over residues 207–219 (VNAQIIDTDSNST) and 391–403 (QEQVVNQPSSQIA). Residues 317 to 495 (AKEIALTPIE…LSSSQNPEET (179 aa)) form an alpha C-terminal domain (alpha-CTD) region. The segment covering 417–426 (RPIDSKETRR) has biased composition (basic and acidic residues). Basic residues predominate over residues 444–453 (RKSSKTKVKA). Polar residues-rich tracts occupy residues 464 to 473 (KSANLQQAEE) and 486 to 495 (LSSSQNPEET).

The protein belongs to the RNA polymerase alpha chain family. In terms of assembly, in plastids the minimal PEP RNA polymerase catalytic core is composed of four subunits: alpha, beta, beta', and beta''. When a (nuclear-encoded) sigma factor is associated with the core the holoenzyme is formed, which can initiate transcription.

The protein localises to the plastid. Its subcellular location is the chloroplast. The catalysed reaction is RNA(n) + a ribonucleoside 5'-triphosphate = RNA(n+1) + diphosphate. In terms of biological role, DNA-dependent RNA polymerase catalyzes the transcription of DNA into RNA using the four ribonucleoside triphosphates as substrates. The polypeptide is DNA-directed RNA polymerase subunit alpha (Nephroselmis olivacea (Green alga)).